Reading from the N-terminus, the 189-residue chain is Flavin prenyltransferase UbiX (189 aa).

FMN contacts are provided by residues 10-12, Ser37, 88-91, and Arg123; these read GAS and SIKT. Residues Tyr153 and Arg169 each contribute to the dimethylallyl phosphate site.

The protein belongs to the UbiX/PAD1 family.

The enzyme catalyses dimethylallyl phosphate + FMNH2 = prenylated FMNH2 + phosphate. The protein operates within cofactor biosynthesis; ubiquinone biosynthesis. Flavin prenyltransferase that catalyzes the synthesis of the prenylated FMN cofactor (prenyl-FMN) for 4-hydroxy-3-polyprenylbenzoic acid decarboxylase UbiD. The prenyltransferase is metal-independent and links a dimethylallyl moiety from dimethylallyl monophosphate (DMAP) to the flavin N5 and C6 atoms of FMN. The chain is Flavin prenyltransferase UbiX from Salmonella typhi.